The sequence spans 515 residues: MNDQVIIFDTTLRDGEQALSASLTVKEKLQIAYALERLGVDVIEAGFPISSPGDFESVQTIAKHIKNSRVCALSRAVAKDIDAAAEALKVADQFRIHTFLATSTIHVQDKLRRSYDDVLEMAVNAVKHARNYTDDVEFSCEDAGRTPIDNLCRMVEAAIDAGASTINIPDTVGYTVPSEFGGIIQTLFNRVPNIDKAIISVHCHDDLGMSVANSIAAVQAGARQIEGTINGIGERAGNCSLEEIAMIIKTRQELLGVSTGIKHEEIHRTSKLVSQLCNMPIQSNKAVVGANAFSHSSGIHQDGMLKNKNTYEIMTPESIGLKNQALNLTSRSGRAAVKSHMDSMGYKEDEYNLDALYADFLKLADRKGQVFDYDLEALMHFSNLREEDDFYKLNYLSVQSGSVMATTSIKMQCGDAEMCEAAVGNGPVDALYQCIYRVTGYEIVLDKFDLTAKGEGEDGLGQADIIANYKGRKYHGTGVSTDIVEASGQALLHVINSIHRADTIAEMKQKKIATV.

The Pyruvate carboxyltransferase domain occupies 5 to 267 (VIIFDTTLRD…STGIKHEEIH (263 aa)). Mn(2+) is bound by residues D14, H202, H204, and N238. The segment at 392-515 (KLNYLSVQSG…EMKQKKIATV (124 aa)) is regulatory domain.

This sequence belongs to the alpha-IPM synthase/homocitrate synthase family. LeuA type 1 subfamily. Homodimer. It depends on Mn(2+) as a cofactor.

The protein localises to the cytoplasm. It carries out the reaction 3-methyl-2-oxobutanoate + acetyl-CoA + H2O = (2S)-2-isopropylmalate + CoA + H(+). It functions in the pathway amino-acid biosynthesis; L-leucine biosynthesis; L-leucine from 3-methyl-2-oxobutanoate: step 1/4. In terms of biological role, catalyzes the condensation of the acetyl group of acetyl-CoA with 3-methyl-2-oxobutanoate (2-ketoisovalerate) to form 3-carboxy-3-hydroxy-4-methylpentanoate (2-isopropylmalate). The protein is 2-isopropylmalate synthase of Vibrio parahaemolyticus serotype O3:K6 (strain RIMD 2210633).